The following is a 253-amino-acid chain: 2-C-methyl-D-erythritol 4-phosphate cytidylyltransferase (253 aa).

A disordered region spans residues Met1 to Leu28.

This sequence belongs to the IspD/TarI cytidylyltransferase family. IspD subfamily.

The enzyme catalyses 2-C-methyl-D-erythritol 4-phosphate + CTP + H(+) = 4-CDP-2-C-methyl-D-erythritol + diphosphate. Its pathway is isoprenoid biosynthesis; isopentenyl diphosphate biosynthesis via DXP pathway; isopentenyl diphosphate from 1-deoxy-D-xylulose 5-phosphate: step 2/6. Functionally, catalyzes the formation of 4-diphosphocytidyl-2-C-methyl-D-erythritol from CTP and 2-C-methyl-D-erythritol 4-phosphate (MEP). The protein is 2-C-methyl-D-erythritol 4-phosphate cytidylyltransferase of Ralstonia nicotianae (strain ATCC BAA-1114 / GMI1000) (Ralstonia solanacearum).